The primary structure comprises 427 residues: Phosphoglucosamine mutase (427 aa).

Ser94 (phosphoserine intermediate) is an active-site residue. Mg(2+)-binding residues include Ser94, Asp228, Asp230, and Asp232. Position 94 is a phosphoserine (Ser94).

It belongs to the phosphohexose mutase family. Mg(2+) is required as a cofactor. Activated by phosphorylation.

The catalysed reaction is alpha-D-glucosamine 1-phosphate = D-glucosamine 6-phosphate. Functionally, catalyzes the conversion of glucosamine-6-phosphate to glucosamine-1-phosphate. The chain is Phosphoglucosamine mutase from Thermotoga sp. (strain RQ2).